Reading from the N-terminus, the 206-residue chain is MMRTLITTHSLLLFLLLLQLLQPLQFQDMYYEDFYFPVSRTEEDFEDFLVEFQSTGPTRPPTKEKVKRRILVNPGMPLGDSGYCNYQIMRKNVYYKYSCVTEHYFLLMQYDELEKTCYNRFVPCKNGIRKCNRSKKLVEGVYCYLTEASNLPMCQYESFYRRGYVLITCTWQNEIQKLIPYTINDIVEPPNHRSLLNEDGVFVISP.

A signal peptide spans 1 to 26 (MMRTLITTHSLLLFLLLLQLLQPLQF). 3 cysteine pairs are disulfide-bonded: Cys-99/Cys-154, Cys-117/Cys-169, and Cys-124/Cys-131. N-linked (GlcNAc...) asparagine glycosylation occurs at Asn-132.

It belongs to the pancreatic ribonuclease family.

The protein resides in the secreted. Functionally, does not exhibit any ribonuclease activity. This is Inactive ribonuclease-like protein 9 (RNASE9) from Saimiri boliviensis boliviensis (Bolivian squirrel monkey).